The chain runs to 28 residues: Arylalkyl acylamidase (28 aa).

Homotetramer.

The enzyme catalyses an N-acetylarylalkylamine + H2O = an aralkylamine + acetate. Activated by divalent metal ions. Inhibited by certain thiol reagents. In terms of biological role, shows a strict specificity for N-acetyl arylalkylamines but not acetanilide derivatives. The polypeptide is Arylalkyl acylamidase (Pseudomonas putida (Arthrobacter siderocapsulatus)).